Here is a 248-residue protein sequence, read N- to C-terminus: Coenzyme F420:L-glutamate ligase (248 aa).

Residues 15–18 (IPLI), 45–46 (ET), and Lys-50 contribute to the GTP site. Asp-115 is a binding site for a divalent metal cation. Asn-118 provides a ligand contact to GTP. A divalent metal cation is bound by residues Asp-155, Ser-156, and Gln-213. 211-218 (MGQSNEGI) is a GTP binding site.

This sequence belongs to the CofE family. In terms of assembly, homodimer. Mg(2+) serves as cofactor. The cofactor is Mn(2+). K(+) is required as a cofactor.

It catalyses the reaction oxidized coenzyme F420-0 + GTP + L-glutamate = oxidized coenzyme F420-1 + GDP + phosphate + H(+). It carries out the reaction oxidized coenzyme F420-1 + GTP + L-glutamate = oxidized coenzyme F420-2 + GDP + phosphate + H(+). The protein operates within cofactor biosynthesis; coenzyme F420 biosynthesis. Catalyzes the GTP-dependent successive addition of two or more gamma-linked L-glutamates to the L-lactyl phosphodiester of 7,8-didemethyl-8-hydroxy-5-deazariboflavin (F420-0) to form coenzyme F420-0-glutamyl-glutamate (F420-2) or polyglutamated F420 derivatives. This Methanococcus maripaludis (strain C7 / ATCC BAA-1331) protein is Coenzyme F420:L-glutamate ligase.